Consider the following 294-residue polypeptide: tRNA pseudouridine synthase B (294 aa).

D39 serves as the catalytic Nucleophile.

The protein belongs to the pseudouridine synthase TruB family. Type 1 subfamily.

The enzyme catalyses uridine(55) in tRNA = pseudouridine(55) in tRNA. Functionally, responsible for synthesis of pseudouridine from uracil-55 in the psi GC loop of transfer RNAs. This chain is tRNA pseudouridine synthase B, found in Streptococcus pyogenes serotype M6 (strain ATCC BAA-946 / MGAS10394).